Here is an 853-residue protein sequence, read N- to C-terminus: Lysine-specific histone demethylase 1A (853 aa).

A disordered region spans residues methionine 1–glycine 177. Residues alanine 7 to serine 26 are compositionally biased toward low complexity. The residue at position 60 (threonine 60) is a Phosphothreonine. The segment covering alanine 76 to proline 97 has biased composition (low complexity). Position 105 is a phosphothreonine (threonine 105). A coiled-coil region spans residues threonine 111 to leucine 152. 2 positions are modified to phosphoserine: serine 127 and serine 132. At tyrosine 136 the chain carries Phosphotyrosine. Position 138 is a phosphoserine (serine 138). Positions glutamate 139–leucine 152 are enriched in basic and acidic residues. A compositionally biased stretch (acidic residues) spans proline 161 to serine 173. Position 167 is a phosphoserine (serine 167). The SWIRM domain maps to valine 175–leucine 274. FAD contacts are provided by residues serine 290, glutamate 309, arginine 311, arginine 317, and methionine 333 to valine 334. The segment at phenylalanine 301 to methionine 853 is demethylase activity. Residues isoleucine 429–asparagine 515 adopt a coiled-coil conformation. Residues lysine 433, lysine 434, and lysine 437 each carry the N6-acetyllysine modification. Glycyl lysine isopeptide (Lys-Gly) (interchain with G-Cter in SUMO2) cross-links involve residues lysine 443 and lysine 470. Lysine 504 participates in a covalent cross-link: Glycyl lysine isopeptide (Lys-Gly) (interchain with G-Cter in ubiquitin). Serine 612 is subject to Phosphoserine. Residues glutamate 802 and threonine 811–valine 812 contribute to the FAD site. Serine 850 bears the Phosphoserine mark.

Belongs to the flavin monoamine oxidase family. In terms of assembly, component of a histone demethylase complex with RCOR1. Component of a BHC histone deacetylase complex that contains HDAC1, HDAC2, HMG20B, KDM1A, RCOR1 and PHF21A. The BHC complex may also contain ZMYM2, ZNF217, ZMYM3, GSE1 and GTF2I. In the complex, RCOR1 strongly enhances the demethylase activity and protects it from the proteasome while PHF21A inhibits the demethylase activity. Interacts with the androgen receptor (AR). Component of a RCOR/GFI/KDM1A/HDAC complex. Interacts directly with GFI1 and GFI1B. Interacts with SNAI1 (via SNAG domain). Interacts with INSM1. Interacts (via AOD/Tower domain) with JADE2 (via C-terminus). Interacts with ESRRB; co-occupes the core set of ESRRB targets. Interacts with SAMD1 (via WH domain); the interaction modulates KDM1A function. Interacts with RBPJ. Interacts with L3MBTL3. Interacts with ZMYND8. FAD serves as cofactor. Post-translationally, acetylated by KAT8 in epithelial but not in mesenchymal cells, thereby regulating the epithelial-to-mesenchymal transition. Acetylation by KAT8 reduces KDM1A association with nucleosomes, thereby decreasing histone H3 demethylation, leading to transcription activatio of target genes. In terms of processing, polyubiquitinated by JADE2; which leads to its proteasomal degradation. Deubiquitinated by USP38; preventing it from degradation by the 26S proteasome. In terms of tissue distribution, ubiquitously expressed.

It is found in the nucleus. It localises to the chromosome. It carries out the reaction N(6),N(6)-dimethyl-L-lysyl(4)-[histone H3] + 2 A + 2 H2O = L-lysyl(4)-[histone H3] + 2 formaldehyde + 2 AH2. Its activity is regulated as follows. The N-terminal sequences of INSM1 and SNAI1 compete with histone H3 for the same binding site and thereby inhibit histone demethylation (in vitro). Its function is as follows. Histone demethylase that can demethylate both 'Lys-4' (H3K4me) and 'Lys-9' (H3K9me) of histone H3, thereby acting as a coactivator or a corepressor, depending on the context. Acts by oxidizing the substrate by FAD to generate the corresponding imine that is subsequently hydrolyzed. Acts as a corepressor by mediating demethylation of H3K4me, a specific tag for epigenetic transcriptional activation. Demethylates both mono- (H3K4me1) and di-methylated (H3K4me2) H3K4me. May play a role in the repression of neuronal genes. Alone, it is unable to demethylate H3K4me on nucleosomes and requires the presence of RCOR1/CoREST to achieve such activity. Also acts as a coactivator of androgen receptor (ANDR)-dependent transcription, by being recruited to ANDR target genes and mediating demethylation of H3K9me, a specific tag for epigenetic transcriptional repression. The presence of PRKCB in ANDR-containing complexes, which mediates phosphorylation of 'Thr-6' of histone H3 (H3T6ph), a specific tag that prevents demethylation H3K4me, prevents H3K4me demethylase activity of KDM1A. Demethylates di-methylated 'Lys-370' of p53/TP53 which prevents interaction of p53/TP53 with TP53BP1 and represses p53/TP53-mediated transcriptional activation. Demethylates and stabilizes the DNA methylase DNMT1. Demethylates methylated 'Lys-44' and methylated 'Lys-119' of SOX2. Required for gastrulation during embryogenesis. Component of a RCOR/GFI/KDM1A/HDAC complex that suppresses, via histone deacetylase (HDAC) recruitment, a number of genes implicated in multilineage blood cell development. Facilitates epithelial-to-mesenchymal transition by acting as an effector of SNAI1-mediated transcription repression of epithelial markers E-cadherin/CDH1, CDN7 and KRT8. Required for the maintenance of the silenced state of the SNAI1 target genes E-cadherin/CDH1 and CDN7. Required for the repression of GIPR expression. The polypeptide is Lysine-specific histone demethylase 1A (Mus musculus (Mouse)).